A 348-amino-acid polypeptide reads, in one-letter code: Dihydroorotase (348 aa).

Zn(2+) contacts are provided by histidine 17 and histidine 19. Residues 19–21 (HLR) and asparagine 45 each bind substrate. Zn(2+) contacts are provided by lysine 103, histidine 140, and histidine 178. Lysine 103 carries the N6-carboxylysine modification. Substrate is bound at residue histidine 140. Leucine 223 is a binding site for substrate. Aspartate 251 contacts Zn(2+). Aspartate 251 is a catalytic residue. Substrate-binding residues include histidine 255 and alanine 267.

The protein belongs to the metallo-dependent hydrolases superfamily. DHOase family. Class II DHOase subfamily. Homodimer. It depends on Zn(2+) as a cofactor.

The enzyme catalyses (S)-dihydroorotate + H2O = N-carbamoyl-L-aspartate + H(+). Its pathway is pyrimidine metabolism; UMP biosynthesis via de novo pathway; (S)-dihydroorotate from bicarbonate: step 3/3. Catalyzes the reversible cyclization of carbamoyl aspartate to dihydroorotate. In Salmonella agona (strain SL483), this protein is Dihydroorotase.